The chain runs to 529 residues: Cytochrome P450 monooxygenase acuD (529 aa).

A helical transmembrane segment spans residues 8–28; sequence FAVIAASAAAVAGVLFLIYAA. Residue asparagine 81 is glycosylated (N-linked (GlcNAc...) asparagine). Residue cysteine 449 participates in heme binding.

Belongs to the cytochrome P450 family. It depends on heme as a cofactor.

Its subcellular location is the endoplasmic reticulum membrane. The enzyme catalyses 3-hydroxybenzyl alcohol + reduced [NADPH--hemoprotein reductase] + O2 = gentisyl alcohol + oxidized [NADPH--hemoprotein reductase] + H2O + H(+). Its pathway is secondary metabolite biosynthesis. In terms of biological role, cytochrome P450 monooxygenase; part of the gene cluster that mediates the biosynthesis of aculins. The pathway begins with the synthesis of 6-methylsalicylic acid by the polyketide synthase (PKS) acuA via condensation of acetate and malonate units. The 6-methylsalicylic acid decarboxylase acuB then catalyzes the decarboxylation of 6-methylsalicylic acid to yield m-cresol (also known as 3-methylphenol). These first reactions occur in the cytosol. The intermediate m-cresol is then transported into the endoplasmic reticulum where the cytochrome P450 monooxygenase acuC converts it to m-hydroxybenzyl alcohol, which is further converted to gentisyl alcohol by the cytochrome P450 monooxygenase acuD. Gentisyl alcohol is further oxidized by the oxidoreductase acuE that probably catalyzes hydroxylation of the aromatic ring. The aromatic system might then be opened by oxidation through a Baeyer-Villiger type of oxidation, which could be catalyzed by acuF, with the carboxylic acid at C-1 subsequently reduced to an aldehyde by acuG. Subsequently, a hemiacetal is formed, before the dehydrogenase acuH would reduce the double bond between C-4 and C-6. Finally, keto-enol tautomerism results in formation of aculinic acid, which exists as two diastereomers (both R/S configurations at C-1) by non-enzymatic hemiacetal formation. The carboxypeptidase acuI could be involved in the linking of aculinic acid to an aculene A moiety produced by the aculene biosynthesis cluster and which leads to the production of aculin A. AcuI may also be involved in the attachment of proline to aculinic acid to form epi-aculins A and B. This chain is Cytochrome P450 monooxygenase acuD, found in Aspergillus aculeatus (strain ATCC 16872 / CBS 172.66 / WB 5094).